The primary structure comprises 246 residues: Exosome complex component Rrp41 (246 aa).

It belongs to the RNase PH family. Rrp41 subfamily. As to quaternary structure, component of the archaeal exosome complex. Forms a hexameric ring-like arrangement composed of 3 Rrp41-Rrp42 heterodimers. The hexameric ring associates with a trimer of Rrp4 and/or Csl4 subunits.

It localises to the cytoplasm. Functionally, catalytic component of the exosome, which is a complex involved in RNA degradation. Has 3'-&gt;5' exoribonuclease activity. Can also synthesize heteromeric RNA-tails. The chain is Exosome complex component Rrp41 from Pyrobaculum aerophilum (strain ATCC 51768 / DSM 7523 / JCM 9630 / CIP 104966 / NBRC 100827 / IM2).